A 283-amino-acid chain; its full sequence is Probable endonuclease 4 (283 aa).

Zn(2+) contacts are provided by His-67, His-107, Glu-144, Asp-178, His-181, His-215, Asp-228, His-230, and Glu-260.

It belongs to the AP endonuclease 2 family. Requires Zn(2+) as cofactor.

The enzyme catalyses Endonucleolytic cleavage to 5'-phosphooligonucleotide end-products.. In terms of biological role, endonuclease IV plays a role in DNA repair. It cleaves phosphodiester bonds at apurinic or apyrimidinic (AP) sites, generating a 3'-hydroxyl group and a 5'-terminal sugar phosphate. This Citrifermentans bemidjiense (strain ATCC BAA-1014 / DSM 16622 / JCM 12645 / Bem) (Geobacter bemidjiensis) protein is Probable endonuclease 4.